Consider the following 681-residue polypeptide: DNA ligase (681 aa).

NAD(+) contacts are provided by residues 45 to 49 (DFDFD), 94 to 95 (SL), and Glu-120. Lys-122 functions as the N6-AMP-lysine intermediate in the catalytic mechanism. Arg-143, Glu-177, Lys-289, and Lys-313 together coordinate NAD(+). Zn(2+) contacts are provided by Cys-403, Cys-406, Cys-421, and Cys-426. The BRCT domain maps to 593–681 (SDQQPFAGQS…SLKINFKNTI (89 aa)).

Belongs to the NAD-dependent DNA ligase family. LigA subfamily. Requires Mg(2+) as cofactor. Mn(2+) serves as cofactor.

The catalysed reaction is NAD(+) + (deoxyribonucleotide)n-3'-hydroxyl + 5'-phospho-(deoxyribonucleotide)m = (deoxyribonucleotide)n+m + AMP + beta-nicotinamide D-nucleotide.. Its function is as follows. DNA ligase that catalyzes the formation of phosphodiester linkages between 5'-phosphoryl and 3'-hydroxyl groups in double-stranded DNA using NAD as a coenzyme and as the energy source for the reaction. It is essential for DNA replication and repair of damaged DNA. In Leptospira borgpetersenii serovar Hardjo-bovis (strain L550), this protein is DNA ligase.